A 1361-amino-acid chain; its full sequence is DNA-directed RNA polymerase subunit beta (1361 aa).

The protein belongs to the RNA polymerase beta chain family. In terms of assembly, the RNAP catalytic core consists of 2 alpha, 1 beta, 1 beta' and 1 omega subunit. When a sigma factor is associated with the core the holoenzyme is formed, which can initiate transcription.

The enzyme catalyses RNA(n) + a ribonucleoside 5'-triphosphate = RNA(n+1) + diphosphate. In terms of biological role, DNA-dependent RNA polymerase catalyzes the transcription of DNA into RNA using the four ribonucleoside triphosphates as substrates. This is DNA-directed RNA polymerase subunit beta from Cellvibrio japonicus (strain Ueda107) (Pseudomonas fluorescens subsp. cellulosa).